The primary structure comprises 130 residues: Small ribosomal subunit protein uS8 (130 aa).

The protein belongs to the universal ribosomal protein uS8 family. Part of the 30S ribosomal subunit.

In terms of biological role, one of the primary rRNA binding proteins, it binds directly to 16S rRNA central domain where it helps coordinate assembly of the platform of the 30S subunit. In Nitrosopumilus maritimus (strain SCM1), this protein is Small ribosomal subunit protein uS8.